Here is a 209-residue protein sequence, read N- to C-terminus: Claudin-like protein ZF-A9 (209 aa).

A run of 4 helical transmembrane segments spans residues 8 to 28 (LGTT…AIPL), 81 to 101 (AILV…FAGG), 114 to 134 (ALVA…GLVP), and 159 to 179 (FGAA…GGGL). The segment at 187-209 (GRTSSRGRYTPASQNGRERSEYV) is disordered. The segment covering 188-201 (RTSSRGRYTPASQN) has biased composition (polar residues).

Belongs to the claudin family.

It is found in the cell membrane. The protein localises to the cell junction. It localises to the tight junction. In terms of biological role, component of tight junction (TJ) strands. This Danio rerio (Zebrafish) protein is Claudin-like protein ZF-A9 (cldng).